Reading from the N-terminus, the 486-residue chain is Phosphomethylpyrimidine synthase (486 aa).

Residues Asn80, Met109, Tyr139, His175, 195–197 (SRG), 236–239 (DSLR), and Glu275 each bind substrate. His279 contacts Zn(2+). Tyr329 lines the substrate pocket. His370 provides a ligand contact to Zn(2+). Positions 450, 453, and 458 each coordinate [4Fe-4S] cluster.

The protein belongs to the ThiC family. The cofactor is [4Fe-4S] cluster.

It carries out the reaction 5-amino-1-(5-phospho-beta-D-ribosyl)imidazole + S-adenosyl-L-methionine = 4-amino-2-methyl-5-(phosphooxymethyl)pyrimidine + CO + 5'-deoxyadenosine + formate + L-methionine + 3 H(+). It functions in the pathway cofactor biosynthesis; thiamine diphosphate biosynthesis. Functionally, catalyzes the synthesis of the hydroxymethylpyrimidine phosphate (HMP-P) moiety of thiamine from aminoimidazole ribotide (AIR) in a radical S-adenosyl-L-methionine (SAM)-dependent reaction. This Trichodesmium erythraeum (strain IMS101) protein is Phosphomethylpyrimidine synthase.